The primary structure comprises 763 residues: MVTTHNLGFPRIGAHRELKFALEKYWKGESSRAELKAVGAQLRARHWQDQARLDFSPVGDFAFYDQVLDMSFTLGNLPERVRGFHGDALDNAFRVARGRSAHGADDHSACCGGVAAGEMTKWFDTNYHYIVPEFDTNTQFSLDPSRLLEQIKEAHAQGVKAKPVIIGPVTYLWLGKAKDGSDKLTLLPRLLPVYAALLDYFTAQGIDWVQIDEPVLVTELDARWRDAFVPAYDALAARRVRVLLATYFGQLKENLELACQLPVDGLHIDAIHARDEVAQVAAQVPETAVLSVGVINGRNVWKTDLNAALAWLEPLHATLGDRLWIAPSCSLLHSPVDLNSERKLDADIRSWLAFALQKLDELTLLASALNNGRACVEAELLANAKAIESRRASPRVHNAAVKAALARIDASLGQRANAYPARAAKQAAALALPAFPTTTIGSFPQTADIRRARSQFKAGELDYAGYKLAMEREITRAVKEQETLGLDVLVHGEAERNDMVEYFGEQLDGYVFSQFGWVQSYGSRCVKPPILFGDISRPKAMTVEWICYAQAQTAKPMKGMLTGPVTILNWSFVRDDQPRSVSCRQLALAIREEVLDLEKAGVRVIQIDEAALREGLPLRRSQWNEYLQWAVESFRIAANGVQDETQIHTHMCYSEFNDIIASIAEMDADVITIETSRSDMELLDAFDDFHYPNQIGPGVYDIHSPNIPDQAHVVDLMKKAAERIPAERLWVNPDCGLKTRAWEEVIPALKNMVAAARTLRQAV.

5-methyltetrahydropteroyltri-L-glutamate is bound by residues 16–19 (RELK) and Lys121. L-homocysteine is bound by residues 440–442 (IGS) and Glu493. L-methionine is bound by residues 440–442 (IGS) and Glu493. Residues 524–525 (RC) and Trp570 contribute to the 5-methyltetrahydropteroyltri-L-glutamate site. Residue Asp608 coordinates L-homocysteine. Asp608 is a binding site for L-methionine. Residue Glu614 coordinates 5-methyltetrahydropteroyltri-L-glutamate. Zn(2+) contacts are provided by His650, Cys652, and Glu674. His703 functions as the Proton donor in the catalytic mechanism. Cys735 is a Zn(2+) binding site.

It belongs to the vitamin-B12 independent methionine synthase family. Requires Zn(2+) as cofactor.

The enzyme catalyses 5-methyltetrahydropteroyltri-L-glutamate + L-homocysteine = tetrahydropteroyltri-L-glutamate + L-methionine. It functions in the pathway amino-acid biosynthesis; L-methionine biosynthesis via de novo pathway; L-methionine from L-homocysteine (MetE route): step 1/1. Catalyzes the transfer of a methyl group from 5-methyltetrahydrofolate to homocysteine resulting in methionine formation. This chain is 5-methyltetrahydropteroyltriglutamate--homocysteine methyltransferase, found in Paraburkholderia phymatum (strain DSM 17167 / CIP 108236 / LMG 21445 / STM815) (Burkholderia phymatum).